The following is a 134-amino-acid chain: Small ribosomal subunit protein bS16 (134 aa).

Residues 79 to 134 (AGIAKRPSRNNPTKGEPGKKAQERLALAKQAEEEAAAKAAEAAAAAAAPAEEAASE) are disordered. A compositionally biased stretch (low complexity) spans 115-134 (AKAAEAAAAAAAPAEEAASE).

Belongs to the bacterial ribosomal protein bS16 family.

This is Small ribosomal subunit protein bS16 from Brucella canis (strain ATCC 23365 / NCTC 10854 / RM-666).